A 491-amino-acid chain; its full sequence is Glycogen synthase 1 (491 aa).

K15 contacts ADP-alpha-D-glucose.

This sequence belongs to the glycosyltransferase 1 family. Bacterial/plant glycogen synthase subfamily.

It catalyses the reaction [(1-&gt;4)-alpha-D-glucosyl](n) + ADP-alpha-D-glucose = [(1-&gt;4)-alpha-D-glucosyl](n+1) + ADP + H(+). The protein operates within glycan biosynthesis; glycogen biosynthesis. Its function is as follows. Synthesizes alpha-1,4-glucan chains using ADP-glucose. The polypeptide is Glycogen synthase 1 (Synechococcus sp. (strain JA-2-3B'a(2-13)) (Cyanobacteria bacterium Yellowstone B-Prime)).